Here is a 122-residue protein sequence, read N- to C-terminus: Serum amyloid A-3 protein (122 aa).

The N-terminal stretch at 1–18 is a signal peptide; sequence MKPSIAIILCILILGVDS. A disordered region spans residues 87–122; the sequence is TGHGAEDSRADQFANEWGRSGKDPNHFRPAGLPKRY.

It belongs to the SAA family. Found in various tissues.

The protein localises to the secreted. Functionally, major acute phase reactant. Apolipoprotein of the HDL complex. In vitro exhibits antimicrobial activity against Escherichia coli, Streptococcus uberis and Pseudomonas aeruginosa. This Mus musculus (Mouse) protein is Serum amyloid A-3 protein (Saa3).